The sequence spans 247 residues: Cell division protein ZapD (247 aa).

The protein belongs to the ZapD family. Interacts with FtsZ.

The protein resides in the cytoplasm. Cell division factor that enhances FtsZ-ring assembly. Directly interacts with FtsZ and promotes bundling of FtsZ protofilaments, with a reduction in FtsZ GTPase activity. This Salmonella dublin (strain CT_02021853) protein is Cell division protein ZapD.